Reading from the N-terminus, the 291-residue chain is Exosome complex component RRP42 (291 aa).

Ala-2 is subject to N-acetylalanine. At Lys-116 the chain carries N6-acetyllysine. Ser-177 is subject to Phosphoserine.

This sequence belongs to the RNase PH family. Component of the RNA exosome core complex (Exo-9), composed of EXOSC1, EXOSC2, EXOSC3, EXOSC4, EXOSC5, EXOSC6, EXOSC7, EXOSC8 and EXOSC9; within the complex interacts with EXOSC2 and EXOSC4. The catalytically inactive RNA exosome core complex (Exo-9) associates with the catalytic subunit EXOSC10/RRP6. Exo-9 may associate with DIS3 to form the nucleolar exosome complex, or DIS3L to form the cytoplasmic exosome complex. Exo-9 is formed by a hexameric base ring consisting of the heterodimers EXOSC4-EXOSC9, EXOSC5-EXOSC8 and EXOSC6-EXOSC7, and a cap ring consisting of EXOSC1, EXOSC2 and EXOSC3. The RNA exosome complex associates with cofactors C1D/RRP47, MPHOSPH6/MPP6 and MTREX/MTR4. Interacts with ZC3HAV1. Interacts with DIS3; the interaction is direct.

The protein resides in the nucleus. The protein localises to the nucleolus. It localises to the cytoplasm. Its function is as follows. Non-catalytic component of the RNA exosome complex which has 3'-&gt;5' exoribonuclease activity and participates in a multitude of cellular RNA processing and degradation events. In the nucleus, the RNA exosome complex is involved in proper maturation of stable RNA species such as rRNA, snRNA and snoRNA, in the elimination of RNA processing by-products and non-coding 'pervasive' transcripts, such as antisense RNA species and promoter-upstream transcripts (PROMPTs), and of mRNAs with processing defects, thereby limiting or excluding their export to the cytoplasm. The RNA exosome may be involved in Ig class switch recombination (CSR) and/or Ig variable region somatic hypermutation (SHM) by targeting AICDA deamination activity to transcribed dsDNA substrates. In the cytoplasm, the RNA exosome complex is involved in general mRNA turnover and specifically degrades inherently unstable mRNAs containing AU-rich elements (AREs) within their 3' untranslated regions, and in RNA surveillance pathways, preventing translation of aberrant mRNAs. It seems to be involved in degradation of histone mRNA. The catalytic inactive RNA exosome core complex of 9 subunits (Exo-9) is proposed to play a pivotal role in the binding and presentation of RNA for ribonucleolysis, and to serve as a scaffold for the association with catalytic subunits and accessory proteins or complexes. This is Exosome complex component RRP42 (EXOSC7) from Homo sapiens (Human).